The following is a 503-amino-acid chain: Aspartyl/glutamyl-tRNA(Asn/Gln) amidotransferase subunit B (503 aa).

This sequence belongs to the GatB/GatE family. GatB subfamily. Heterotrimer of A, B and C subunits.

The catalysed reaction is L-glutamyl-tRNA(Gln) + L-glutamine + ATP + H2O = L-glutaminyl-tRNA(Gln) + L-glutamate + ADP + phosphate + H(+). It carries out the reaction L-aspartyl-tRNA(Asn) + L-glutamine + ATP + H2O = L-asparaginyl-tRNA(Asn) + L-glutamate + ADP + phosphate + 2 H(+). Functionally, allows the formation of correctly charged Asn-tRNA(Asn) or Gln-tRNA(Gln) through the transamidation of misacylated Asp-tRNA(Asn) or Glu-tRNA(Gln) in organisms which lack either or both of asparaginyl-tRNA or glutaminyl-tRNA synthetases. The reaction takes place in the presence of glutamine and ATP through an activated phospho-Asp-tRNA(Asn) or phospho-Glu-tRNA(Gln). The protein is Aspartyl/glutamyl-tRNA(Asn/Gln) amidotransferase subunit B of Mycobacterium avium (strain 104).